The sequence spans 976 residues: Ephrin type-A receptor 2 (976 aa).

The N-terminal stretch at 1-23 is a signal peptide; that stretch reads MELQAARACFALLWGCALAAAAA. Residues 1–206 are mediates interaction with CLDN4; sequence MELQAARACF…YYKKCPELLQ (206 aa). The Extracellular segment spans residues 24–537; sequence AQGKEVVLLD…SPEGSGNLAV (514 aa). The region spanning 28–206 is the Eph LBD domain; that stretch reads EVVLLDFAAA…YYKKCPELLQ (179 aa). 2 disulfides stabilise this stretch: C70–C188 and C105–C115. Residues 328 to 432 enclose the Fibronectin type-III 1 domain; sequence PPSAPHYLTA…TSRSFRTASV (105 aa). N-linked (GlcNAc...) asparagine glycosylation is found at N407 and N435. The Fibronectin type-III 2 domain occupies 438–529; sequence EPPKVRLEGR…KVHEFQTLSP (92 aa). A helical transmembrane segment spans residues 538 to 558; that stretch reads IGGVAVGVVLLLVLAGVGFFI. At 559 to 976 the chain is on the cytoplasmic side; it reads HRRRKNQRAR…DQVNTVGIPI (418 aa). S570 is subject to Phosphoserine. The residue at position 575 (Y575) is a Phosphotyrosine. A Phosphoserine modification is found at S579. A Phosphotyrosine; by autocatalysis modification is found at Y588. Y594 is modified (phosphotyrosine). A mediates interaction with ARHGEF16 and ELMO2 region spans residues 606 to 906; it reads TEIHPSCVTR…STSGSEGVPF (301 aa). The Protein kinase domain maps to 613–875; it reads VTRQKVIGAG…DIVSILDKLI (263 aa). Residue 619 to 627 coordinates ATP; sequence IGAGEFGEV. Phosphotyrosine is present on Y628. Residue K646 participates in ATP binding. T647 carries the post-translational modification Phosphothreonine. A Phosphotyrosine; by autocatalysis modification is found at Y735. D739 acts as the Proton acceptor in catalysis. Y772 is modified (phosphotyrosine). Phosphoserine occurs at positions 869 and 892. A negatively regulates interaction with ARHGEF16 region spans residues 886 to 976; the sequence is DFDPRVSIRL…DQVNTVGIPI (91 aa). At S897 the chain carries Phosphoserine; by PKB/AKT1, RPS6KA1, RPS6KA3 AND PKA. The residue at position 901 (S901) is a Phosphoserine. Positions 904–968 constitute an SAM domain; it reads VPFRTVSEWL…AYSLLGLKDQ (65 aa). Residue Y921 is modified to Phosphotyrosine; by autocatalysis. The residue at position 930 (Y930) is a Phosphotyrosine. Residues 974 to 976 carry the PDZ-binding motif; the sequence is IPI.

It belongs to the protein kinase superfamily. Tyr protein kinase family. Ephrin receptor subfamily. Homodimer. Interacts with SLA. Interacts (phosphorylated form) with VAV2, VAV3 and PI3-kinase p85 subunit (PIK3R1, PIK3R2 or PIK3R3); critical for the EFNA1-induced activation of RAC1 which stimulates cell migration. Interacts with INPPL1; regulates activated EPHA2 endocytosis and degradation. Interacts (inactivated form) with PTK2/FAK1 and interacts (EFNA1 ligand-activated form) with PTPN11; regulates integrin-mediated adhesion. Interacts with ARHGEF16, DOCK4 and ELMO2; mediates ligand-independent activation of RAC1 which stimulates cell migration. Interacts with CLDN4; phosphorylates CLDN4 and may regulate tight junctions. Interacts with ACP1. Interacts (via SAM domain) with ANKS1A (via SAM domain). Interacts with CEMIP. Interacts with NCK1; may regulate EPHA2 activity in cell migration and adhesion. Interacts with TIMD4. As to quaternary structure, (Microbial infection) Interacts with human herpes virus 8/HHV-8 glycoprotein L/gL and glycoprotein H/gH heterodimer; this interaction triggers EPHA2 phosphorylation and endocytosis, allowing virus entry. In terms of assembly, (Microbial infection) Interacts with human cytomegalovirus (HCMV) glycoprotein L/gL and glycoprotein H/gH heterodimer. (Microbial infection) Interacts with Epstein-Barr virus/HHV-4 glycoprotein L/gL and glycoprotein H/gH heterodimer; this interaction facilitates virus internalization and fusion. In terms of processing, autophosphorylates. Phosphorylated on tyrosine upon binding and activation by EFNA1. Phosphorylated residues Tyr-588 and Tyr-594 are required for binding VAV2 and VAV3 while phosphorylated residues Tyr-735 and Tyr-930 are required for binding PI3-kinase p85 subunit (PIK3R1, PIK3R2 or PIK3R3). These phosphorylated residues are critical for recruitment of VAV2 and VAV3 and PI3-kinase p85 subunit which transduce downstream signaling to activate RAC1 GTPase and cell migration. Dephosphorylation of Tyr-930 by PTPRF prevents the interaction of EPHA2 with NCK1. Phosphorylated at Ser-897 by PKB; serum-induced phosphorylation which targets EPHA2 to the cell leading edge and stimulates cell migration. Phosphorylation by PKB is inhibited by EFNA1-activated EPHA2 which regulates PKB activity via a reciprocal regulatory loop. Phosphorylated at Ser-897 in response to TNF by RPS6KA1 and RPS6KA3; RPS6KA-EPHA2 signaling pathway controls cell migration. Phosphorylated at Ser-897 by PKA; blocks cell retraction induced by EPHA2 kinase activity. Dephosphorylated by ACP1. Post-translationally, ubiquitinated by CHIP/STUB1. Ubiquitination is regulated by the HSP90 chaperone and regulates the receptor stability and activity through proteasomal degradation. ANKS1A prevents ubiquitination and degradation. In terms of tissue distribution, expressed in brain and glioma tissue and glioma cell lines (at protein level). Expressed most highly in tissues that contain a high proportion of epithelial cells, e.g. skin, intestine, lung, and ovary.

It localises to the cell membrane. It is found in the cell projection. Its subcellular location is the ruffle membrane. The protein resides in the lamellipodium membrane. The protein localises to the cell junction. It localises to the focal adhesion. The enzyme catalyses L-tyrosyl-[protein] + ATP = O-phospho-L-tyrosyl-[protein] + ADP + H(+). Receptor tyrosine kinase which binds promiscuously membrane-bound ephrin-A family ligands residing on adjacent cells, leading to contact-dependent bidirectional signaling into neighboring cells. The signaling pathway downstream of the receptor is referred to as forward signaling while the signaling pathway downstream of the ephrin ligand is referred to as reverse signaling. Activated by the ligand ephrin-A1/EFNA1 regulates migration, integrin-mediated adhesion, proliferation and differentiation of cells. Regulates cell adhesion and differentiation through DSG1/desmoglein-1 and inhibition of the ERK1/ERK2 (MAPK3/MAPK1, respectively) signaling pathway. May also participate in UV radiation-induced apoptosis and have a ligand-independent stimulatory effect on chemotactic cell migration. During development, may function in distinctive aspects of pattern formation and subsequently in development of several fetal tissues. Involved for instance in angiogenesis, in early hindbrain development and epithelial proliferation and branching morphogenesis during mammary gland development. Engaged by the ligand ephrin-A5/EFNA5 may regulate lens fiber cells shape and interactions and be important for lens transparency development and maintenance. With ephrin-A2/EFNA2 may play a role in bone remodeling through regulation of osteoclastogenesis and osteoblastogenesis. Its function is as follows. (Microbial infection) Acts as a receptor for hepatitis C virus (HCV) in hepatocytes and facilitates its cell entry. Mediates HCV entry by promoting the formation of the CD81-CLDN1 receptor complexes that are essential for HCV entry and by enhancing membrane fusion of cells expressing HCV envelope glycoproteins. Functionally, acts as a receptor for human cytomegalovirus (HCMV) to mediate viral entry and fusion in glioblastoma cells. The protein is Ephrin type-A receptor 2 (EPHA2) of Homo sapiens (Human).